A 438-amino-acid polypeptide reads, in one-letter code: Adenosylhomocysteinase (438 aa).

Substrate-binding residues include threonine 61, aspartate 137, and glutamate 162. 163 to 165 serves as a coordination point for NAD(+); sequence TTT. The substrate site is built by lysine 192 and aspartate 196. NAD(+) contacts are provided by residues asparagine 197, 226–231, glutamate 249, asparagine 284, 305–307, and asparagine 352; these read GYGDVG and IGH.

The protein belongs to the adenosylhomocysteinase family. NAD(+) serves as cofactor.

The protein resides in the cytoplasm. It carries out the reaction S-adenosyl-L-homocysteine + H2O = L-homocysteine + adenosine. It functions in the pathway amino-acid biosynthesis; L-homocysteine biosynthesis; L-homocysteine from S-adenosyl-L-homocysteine: step 1/1. Functionally, may play a key role in the regulation of the intracellular concentration of adenosylhomocysteine. The protein is Adenosylhomocysteinase of Flavobacterium psychrophilum (strain ATCC 49511 / DSM 21280 / CIP 103535 / JIP02/86).